The following is a 157-amino-acid chain: Glutathione peroxidase homolog BsaA (157 aa).

The active site involves Cys-35.

This sequence belongs to the glutathione peroxidase family.

In Halalkalibacterium halodurans (strain ATCC BAA-125 / DSM 18197 / FERM 7344 / JCM 9153 / C-125) (Bacillus halodurans), this protein is Glutathione peroxidase homolog BsaA (bsaA).